Consider the following 1364-residue polypeptide: Toxin subunit YenA2 (1364 aa).

The stretch at 1025–1080 forms a coiled coil; sequence SESYRRRRQEWELQYKQAEWEVNSVEQQINLQNMQIKAANKRLEQVEAQQQQAMAL.

As to quaternary structure, semipurified toxin complex consists of at least YenA1-YenA2-YenB-YenC1-YenC2-Chi1-Chi2. The Yen-TC:K9 subcomplex is about 26 nm tall and 22 nm in diameter with 5-fold symmetry and 5 copies of YenA1, YenA2, Chi1 and Chi2; the chitinase subunits may be solvent accessible on the exterior the complex. The Yen-TC:K9 subcomplex has no insecticidal activity. The native complex with additional YenB, YenC1 and YenC2 subunits is 16 nm taller and is insecticidal; the toxicity-conferring subunits are present at about 1 copy each. The isolated toxin complex includes 3 peptides starting between residues 768 and 778 of this protein, which might be physiologically relevant.

The protein localises to the secreted. Part of an orally active toxin complex (TC) with strong insecticidal effects on larvae of the Coleoptera Costelytra zealandica, Acrossidius tasmania and Adoryphorus couloni and some Lepidoptera larvae. The TC has an endochitinase activity. In Yersinia entomophaga, this protein is Toxin subunit YenA2.